Here is a 341-residue protein sequence, read N- to C-terminus: Malate dehydrogenase, mitochondrial (341 aa).

The N-terminal 22 residues, 1–22 (MFRSALVRSSASAKQSLLRRSF), are a transit peptide targeting the mitochondrion. Residues 36 to 42 (GAAGGIG) and D62 each bind NAD(+). Substrate is bound by residues R109 and R115. Residues N122 and 145-147 (ISN) contribute to the NAD(+) site. N147 and R181 together coordinate substrate. M256 is a binding site for NAD(+).

Belongs to the LDH/MDH superfamily. MDH type 1 family. As to quaternary structure, homodimer.

It localises to the mitochondrion matrix. The enzyme catalyses (S)-malate + NAD(+) = oxaloacetate + NADH + H(+). The sequence is that of Malate dehydrogenase, mitochondrial (MDH) from Brassica napus (Rape).